The chain runs to 730 residues: Dynein axonemal intermediate chain 7 (730 aa).

Positions 1-14 (MAPKSKKAPSKKKM) are enriched in basic residues. The disordered stretch occupies residues 1–20 (MAPKSKKAPSKKKMTKAERL).

This sequence belongs to the DNAI7 family. Part of the multisubunit axonemal dynein complex formed at least of two heavy chains and a number of intermediate and light chains. Interacts with tubulin. Associates with microtubule. In terms of processing, ubiquitinated. Ubiquitination leads to its degradation through the 26S proteasome. Ubiquitin-proteasome-mediated DNAI7 degradation occurs in mitosis. As to expression, high expressed in lung, kidney, and testis.

The protein localises to the cell projection. The protein resides in the cilium. It is found in the cytoplasm. Via its association with the multisubunit axonemal dynein complex, is potentially involved in the regulation of cilia function. May also act as a cell cycle regulator. This chain is Dynein axonemal intermediate chain 7 (Dnai7), found in Mus musculus (Mouse).